A 502-amino-acid polypeptide reads, in one-letter code: Glycerol kinase (502 aa).

Thr14 provides a ligand contact to ADP. Residues Thr14, Thr15, and Ser16 each coordinate ATP. Thr14 lines the sn-glycerol 3-phosphate pocket. Arg18 is a binding site for ADP. Sn-glycerol 3-phosphate-binding residues include Arg84, Glu85, Tyr136, and Asp246. Residues Arg84, Glu85, Tyr136, Asp246, and Gln247 each contribute to the glycerol site. Residues Thr268 and Gly311 each contribute to the ADP site. ATP contacts are provided by Thr268, Gly311, Gln315, and Gly412. 2 residues coordinate ADP: Gly412 and Asn416.

This sequence belongs to the FGGY kinase family. In terms of assembly, homotetramer and homodimer (in equilibrium). Heterodimer with EIIA-Glc. Binds 1 zinc ion per glycerol kinase EIIA-Glc dimer. The zinc ion is important for dimerization.

The enzyme catalyses glycerol + ATP = sn-glycerol 3-phosphate + ADP + H(+). It functions in the pathway polyol metabolism; glycerol degradation via glycerol kinase pathway; sn-glycerol 3-phosphate from glycerol: step 1/1. Activity of this regulatory enzyme is affected by several metabolites. Allosterically and non-competitively inhibited by fructose 1,6-bisphosphate (FBP) and unphosphorylated phosphocarrier protein EIIA-Glc (III-Glc), an integral component of the bacterial phosphotransferase (PTS) system. In terms of biological role, key enzyme in the regulation of glycerol uptake and metabolism. Catalyzes the phosphorylation of glycerol to yield sn-glycerol 3-phosphate. The chain is Glycerol kinase from Shigella dysenteriae serotype 1 (strain Sd197).